Consider the following 443-residue polypeptide: Ribulose bisphosphate carboxylase large chain (443 aa).

Residues asparagine 89 and threonine 139 each coordinate substrate. Lysine 141 acts as the Proton acceptor in catalysis. Lysine 143 is a substrate binding site. 3 residues coordinate Mg(2+): lysine 167, aspartate 169, and glutamate 170. Lysine 167 carries the post-translational modification N6-carboxylysine. The active-site Proton acceptor is the histidine 260. Positions 261, 293, and 345 each coordinate substrate.

The protein belongs to the RuBisCO large chain family. Type I subfamily. As to quaternary structure, heterohexadecamer of 8 large chains and 8 small chains; disulfide-linked. The disulfide link is formed within the large subunit homodimers. It depends on Mg(2+) as a cofactor. The disulfide bond which can form in the large chain dimeric partners within the hexadecamer appears to be associated with oxidative stress and protein turnover.

The protein resides in the plastid. It localises to the chloroplast. It catalyses the reaction 2 (2R)-3-phosphoglycerate + 2 H(+) = D-ribulose 1,5-bisphosphate + CO2 + H2O. It carries out the reaction D-ribulose 1,5-bisphosphate + O2 = 2-phosphoglycolate + (2R)-3-phosphoglycerate + 2 H(+). Functionally, ruBisCO catalyzes two reactions: the carboxylation of D-ribulose 1,5-bisphosphate, the primary event in carbon dioxide fixation, as well as the oxidative fragmentation of the pentose substrate in the photorespiration process. Both reactions occur simultaneously and in competition at the same active site. This Buddleja davidii (Butterfly bush) protein is Ribulose bisphosphate carboxylase large chain.